Here is an 867-residue protein sequence, read N- to C-terminus: Protein melted homolog (867 aa).

Positions 480–505 are disordered; it reads MPSSSRTNVHLSQAASSSRGHSLPQT. The PH domain occupies 753–860; sequence EKVLEGQLKE…WLHCLQIAMA (108 aa).

It belongs to the MELT/VEPH family.

The protein resides in the cell membrane. The polypeptide is Protein melted homolog (Caenorhabditis briggsae).